A 213-amino-acid polypeptide reads, in one-letter code: FMN-dependent NADH:quinone oxidoreductase 1 (213 aa).

18 to 20 (SVS) contacts FMN.

Belongs to the azoreductase type 1 family. In terms of assembly, homodimer. The cofactor is FMN.

It catalyses the reaction 2 a quinone + NADH + H(+) = 2 a 1,4-benzosemiquinone + NAD(+). It carries out the reaction N,N-dimethyl-1,4-phenylenediamine + anthranilate + 2 NAD(+) = 2-(4-dimethylaminophenyl)diazenylbenzoate + 2 NADH + 2 H(+). In terms of biological role, quinone reductase that provides resistance to thiol-specific stress caused by electrophilic quinones. Its function is as follows. Also exhibits azoreductase activity. Catalyzes the reductive cleavage of the azo bond in aromatic azo compounds to the corresponding amines. This chain is FMN-dependent NADH:quinone oxidoreductase 1, found in Bacillus cereus (strain ZK / E33L).